Here is a 471-residue protein sequence, read N- to C-terminus: Glutamate--tRNA ligase (471 aa).

The 'HIGH' region motif lies at proline 10–glycine 20. Zn(2+)-binding residues include cysteine 107, cysteine 109, cysteine 134, and glutamate 136. A 'KMSKS' region motif is present at residues arginine 244–arginine 248. Position 247 (lysine 247) interacts with ATP.

The protein belongs to the class-I aminoacyl-tRNA synthetase family. Glutamate--tRNA ligase type 1 subfamily. As to quaternary structure, monomer. The cofactor is Zn(2+).

Its subcellular location is the cytoplasm. The enzyme catalyses tRNA(Glu) + L-glutamate + ATP = L-glutamyl-tRNA(Glu) + AMP + diphosphate. In terms of biological role, catalyzes the attachment of glutamate to tRNA(Glu) in a two-step reaction: glutamate is first activated by ATP to form Glu-AMP and then transferred to the acceptor end of tRNA(Glu). This is Glutamate--tRNA ligase from Anaeromyxobacter sp. (strain Fw109-5).